A 51-amino-acid chain; its full sequence is Small ribosomal subunit protein eS31 (51 aa).

4 residues coordinate Zn(2+): Cys22, Cys25, Cys40, and Cys43. The segment at 22 to 43 (CPRCGPGVFMADHGDRWACGRC) adopts a C4-type zinc-finger fold.

The protein belongs to the eukaryotic ribosomal protein eS31 family. In terms of assembly, part of the 30S ribosomal subunit. Requires Zn(2+) as cofactor.

The sequence is that of Small ribosomal subunit protein eS31 from Pyrococcus abyssi (strain GE5 / Orsay).